The sequence spans 200 residues: MQTSPLLENLIESLRCLPGVGPKSAQRMAYHLLQRDRSGGMNLARALTEAMSKIGHCEHCRTFTEEDICSICDNPRRQNSRLLCVVEMPADIQAIEQTGQFSGRYFVLMGHLSPLDGIGPREIGLDLLQRRLQQEQFNEVILATNPTVEGDATANYIAELCNQQNIKVSRIAHGIPVGGELETVDGTTLTHSFLGRRTIG.

The segment at 57-72 adopts a C4-type zinc-finger fold; that stretch reads CEHCRTFTEEDICSIC. One can recognise a Toprim domain in the interval 81–176; the sequence is RLLCVVEMPA…KVSRIAHGIP (96 aa).

This sequence belongs to the RecR family.

May play a role in DNA repair. It seems to be involved in an RecBC-independent recombinational process of DNA repair. It may act with RecF and RecO. The protein is Recombination protein RecR of Mannheimia succiniciproducens (strain KCTC 0769BP / MBEL55E).